We begin with the raw amino-acid sequence, 141 residues long: Albumin-8 (141 aa).

The signal sequence occupies residues 1-25 (MARFSIVFAAAGVLLLVAMAPVSEA). Residues 26–38 (STTTIITTIIEEN) constitute a propeptide that is removed on maturation. 4 disulfide bridges follow: Cys49–Cys100, Cys62–Cys89, Cys90–Cys132, and Cys102–Cys139.

Belongs to the 2S seed storage albumins family. As to quaternary structure, heterodimer; disulfide-linked.

In terms of biological role, this is a 2S seed storage protein. In Helianthus annuus (Common sunflower), this protein is Albumin-8.